The primary structure comprises 218 residues: Protein-methionine-sulfoxide reductase heme-binding subunit MsrQ (218 aa).

Transmembrane regions (helical) follow at residues 14-34 (AVHAAVLAPIALLGWQFWQVW), 60-80 (LLLITLAITPLRQLTGQAVLI), 86-106 (LGLYAFFYASVHLTAYLWLDL), 121-141 (PYITVGFTAWLLLVPLAITST), and 155-175 (LHMLIYPIGLLAVLHFWWLVK).

It belongs to the MsrQ family. In terms of assembly, heterodimer of a catalytic subunit (MsrP) and a heme-binding subunit (MsrQ). Requires FMN as cofactor. Heme b is required as a cofactor.

The protein resides in the cell inner membrane. In terms of biological role, part of the MsrPQ system that repairs oxidized periplasmic proteins containing methionine sulfoxide residues (Met-O), using respiratory chain electrons. Thus protects these proteins from oxidative-stress damage caused by reactive species of oxygen and chlorine generated by the host defense mechanisms. MsrPQ is essential for the maintenance of envelope integrity under bleach stress, rescuing a wide series of structurally unrelated periplasmic proteins from methionine oxidation. MsrQ provides electrons for reduction to the reductase catalytic subunit MsrP, using the quinone pool of the respiratory chain. This chain is Protein-methionine-sulfoxide reductase heme-binding subunit MsrQ, found in Xanthomonas campestris pv. campestris (strain 8004).